Reading from the N-terminus, the 605-residue chain is Branchpoint-bridging protein (605 aa).

Disordered regions lie at residues 1 to 75 (MSST…GENK) and 117 to 139 (VPPE…KRTN). In terms of domain architecture, KH spans 184 to 264 (YIPVNEYPDI…EKIARAVQLV (81 aa)). A disordered region spans residues 294–319 (GTLRDDENYGGAPQSSSGDEMDDRNK). The CCHC-type zinc-finger motif lies at 328–345 (IVCHICGSKGHFARDCLE). The span at 376–392 (ASQQQSIAQNPNTNNVS) shows a compositional bias: polar residues. The tract at residues 376–605 (ASQQQSIAQN…PPPGVIGPPK (230 aa)) is disordered. Residues 411–424 (PMSERGGSFDRFDR) are compositionally biased toward basic and acidic residues. A compositionally biased stretch (polar residues) spans 428-445 (NQSNQREPQQQSHQQNMH). Positions 446-466 (NTNGNNYDRYDRNFNNSSNSS) are enriched in low complexity. Positions 468 to 484 (ELPPWHRPTPPSQPAAP) are enriched in pro residues. Positions 499–510 (SVQQSMQQSPWN) are enriched in polar residues. Pro residues-rich tracts occupy residues 561–581 (SVPP…PPGV) and 591–605 (RHPP…GPPK).

Belongs to the BBP/SF1 family.

The protein localises to the nucleus. Functionally, necessary for the splicing of pre-mRNA. Has a role in the recognition of the branch site (5'-UACUAAC-3'), the pyrimidine tract and the 3'-splice site at the 3'-end of introns. The sequence is that of Branchpoint-bridging protein (BBP) from Yarrowia lipolytica (strain CLIB 122 / E 150) (Yeast).